Reading from the N-terminus, the 644-residue chain is CTP synthase (644 aa).

One can recognise a Glutamine amidotransferase type-1 domain in the interval 300–551; that stretch reads SIAIVGKYTK…LGLILASVDR (252 aa). Active-site for GATase activity residues include Cys-399, His-527, and Glu-529.

This sequence belongs to the CTP synthase family.

The enzyme catalyses UTP + L-glutamine + ATP + H2O = CTP + L-glutamate + ADP + phosphate + 2 H(+). Its pathway is pyrimidine metabolism; CTP biosynthesis via de novo pathway; CTP from UDP: step 2/2. Catalyzes the ATP-dependent amination of UTP to CTP with either L-glutamine or ammonia as the source of nitrogen. Constitutes the rate-limiting enzyme in the synthesis of cytosine nucleotides. This Drosophila pseudoobscura pseudoobscura (Fruit fly) protein is CTP synthase.